The following is an 843-amino-acid chain: Protein P (843 aa).

The segment at 1–177 (MPLSYQHFRK…FCGSPYSWEQ (177 aa)) is terminal protein domain (TP). Positions 178–346 (ELQHGRLVFQ…YCLSHIVNLL (169 aa)) are spacer. Disordered stretches follow at residues 218–243 (LKQS…SGSI) and 290–316 (STSK…RSQS). A compositionally biased stretch (polar residues) spans 290 to 299 (STSKRQSSSG). The interval 347–690 (EDWGPCTEHG…YLHLYPVARQ (344 aa)) is polymerase/reverse transcriptase domain (RT). One can recognise a Reverse transcriptase domain in the interval 357 to 600 (EHNIRIPRTP…YSLNFMGYVI (244 aa)). Mg(2+)-binding residues include Asp-429, Asp-551, and Asp-552.

Belongs to the hepadnaviridae P protein family.

It carries out the reaction DNA(n) + a 2'-deoxyribonucleoside 5'-triphosphate = DNA(n+1) + diphosphate. The enzyme catalyses Endonucleolytic cleavage to 5'-phosphomonoester.. Its activity is regulated as follows. Activated by host HSP70 and HSP40 in vitro to be able to bind the epsilon loop of the pgRNA. Because deletion of the RNase H region renders the protein partly chaperone-independent, the chaperones may be needed indirectly to relieve occlusion of the RNA-binding site by this domain. Inhibited by several reverse-transcriptase inhibitors: Lamivudine, Adefovir and Entecavir. Its function is as follows. Multifunctional enzyme that converts the viral RNA genome into dsDNA in viral cytoplasmic capsids. This enzyme displays a DNA polymerase activity that can copy either DNA or RNA templates, and a ribonuclease H (RNase H) activity that cleaves the RNA strand of RNA-DNA heteroduplexes in a partially processive 3'- to 5'-endonucleasic mode. Neo-synthesized pregenomic RNA (pgRNA) are encapsidated together with the P protein, and reverse-transcribed inside the nucleocapsid. Initiation of reverse-transcription occurs first by binding the epsilon loop on the pgRNA genome, and is initiated by protein priming, thereby the 5'-end of (-)DNA is covalently linked to P protein. Partial (+)DNA is synthesized from the (-)DNA template and generates the relaxed circular DNA (RC-DNA) genome. After budding and infection, the RC-DNA migrates in the nucleus, and is converted into a plasmid-like covalently closed circular DNA (cccDNA). The activity of P protein does not seem to be necessary for cccDNA generation, and is presumably released from (+)DNA by host nuclear DNA repair machinery. This is Protein P from Homo sapiens (Human).